The sequence spans 300 residues: Ribosomal RNA small subunit methyltransferase H (300 aa).

Residues 35-37, Asp-55, Phe-82, Asp-100, and Gln-107 each bind S-adenosyl-L-methionine; that span reads GGH.

This sequence belongs to the methyltransferase superfamily. RsmH family.

It localises to the cytoplasm. It catalyses the reaction cytidine(1402) in 16S rRNA + S-adenosyl-L-methionine = N(4)-methylcytidine(1402) in 16S rRNA + S-adenosyl-L-homocysteine + H(+). Its function is as follows. Specifically methylates the N4 position of cytidine in position 1402 (C1402) of 16S rRNA. The protein is Ribosomal RNA small subunit methyltransferase H of Chlamydia trachomatis serovar L2 (strain ATCC VR-902B / DSM 19102 / 434/Bu).